Here is a 351-residue protein sequence, read N- to C-terminus: Autoinducer 2 import system permease protein LsrC (351 aa).

Helical transmembrane passes span 14–34 (LLAI…YFSL), 39–59 (MIFS…LVML), 70–90 (ITGL…GLVA), 93–113 (LFAL…VTWL), 115–135 (IPAI…MLLL), 155–175 (ILFS…AMAW), 213–233 (MNGV…GFIP), 252–272 (GISL…AFLL), and 284–304 (LPAW…LVFD).

This sequence belongs to the binding-protein-dependent transport system permease family. AraH/RbsC subfamily. In terms of assembly, the complex is composed of two ATP-binding proteins (LsrA), two transmembrane proteins (LsrC and LsrD) and a solute-binding protein (LsrB).

Its subcellular location is the cell inner membrane. Functionally, part of the ABC transporter complex LsrABCD involved in autoinducer 2 (AI-2) import. Probably responsible for the translocation of the substrate across the membrane. This Yersinia pseudotuberculosis serotype O:3 (strain YPIII) protein is Autoinducer 2 import system permease protein LsrC (lsrC).